The chain runs to 948 residues: Phosphoenolpyruvate carboxylase (948 aa).

Residues His138 and Lys610 contribute to the active site.

Belongs to the PEPCase type 1 family. It depends on Mg(2+) as a cofactor.

It carries out the reaction oxaloacetate + phosphate = phosphoenolpyruvate + hydrogencarbonate. Its function is as follows. Forms oxaloacetate, a four-carbon dicarboxylic acid source for the tricarboxylic acid cycle. This chain is Phosphoenolpyruvate carboxylase, found in Streptococcus sanguinis (strain SK36).